Reading from the N-terminus, the 158-residue chain is C-type lectin BML-2 (158 aa).

An N-terminal signal peptide occupies residues 1-23 (MGHFTFTGLCLLAMFLSLRGAEC). Cystine bridges form between Cys26–Cys37, Cys54–Cys154, Cys61–Cys156, and Cys129–Cys146. Positions 33–155 (KNGLCYKVFS…CESLHPFLCQ (123 aa)) constitute a C-type lectin domain. The Mannose-binding motif lies at 119–121 (EPN). Asn121 is a glycosylation site (N-linked (GlcNAc...) asparagine). Ca(2+)-binding residues include Glu127, Asn142, and Asp143.

The protein belongs to the true venom lectin family. As to quaternary structure, dimer. Probably non-covalently linked. Expressed by the venom gland.

The protein resides in the secreted. Recombinant C-type lectin BML-2 is able to agglutinate erythrocytes. May be a calcium-dependent lectin. The protein is C-type lectin BML-2 of Bungarus multicinctus (Many-banded krait).